We begin with the raw amino-acid sequence, 1491 residues long: Neurexin-1a (1491 aa).

The first 27 residues, 1–27 (MSFSMRNGAHLIWIGLLVCCLVDMGAS), serve as a signal peptide directing secretion. The Laminin G-like 1 domain maps to 28–208 (MEFTGAEGQW…SDICEADHIC (181 aa)). Topologically, residues 28 to 1415 (MEFTGAEGQW…EVIRESSSTT (1388 aa)) are extracellular. The EGF-like 1 domain maps to 198 to 236 (NSDICEADHICLNGGVCSIVNDEPICDCSETGFQGKDCS). Intrachain disulfides connect Cys202/Cys214, Cys208/Cys223, and Cys225/Cys235. Laminin G-like domains lie at 263–460 (MATF…AFKC) and 467–661 (DPVT…KPSC). The Ca(2+) site is built by Asp309, Leu326, and Met394. 5 cysteine pairs are disulfide-bonded: Cys424–Cys460, Cys632–Cys661, Cys669–Cys680, Cys674–Cys689, and Cys691–Cys701. The EGF-like 2 domain maps to 665-702 (PPKQCLSNPCLNSGTCREGWNRYVCDCSGTGYLGRSCE). Laminin G-like domains follow at residues 707–880 (ILSY…IDYC) and 894–1069 (DPVT…ERGC). 4 cysteine pairs are disulfide-bonded: Cys1041–Cys1069, Cys1076–Cys1087, Cys1081–Cys1096, and Cys1098–Cys1108. In terms of domain architecture, EGF-like 3 spans 1072-1109 (PSTTCQEDSCSNQGVCLQQWEGFSCDCSMTSYGGPLCN). Residues 1113 to 1314 (TTYIFGRDGG…DPNVRVEGSA (202 aa)) form the Laminin G-like 6 domain. The segment at 1318-1408 (GDMPSSSITP…AKGYPSPEVI (91 aa)) is disordered. Residues 1322 to 1353 (SSSITPQSSVSAAGNRSETSPSITDITTTTAS) are compositionally biased toward low complexity. Residues 1354–1364 (NRQGKQTTTPQ) show a composition bias toward polar residues. The helical transmembrane segment at 1416 to 1436 (GMVVGIVAAAALCILILLYAM) threads the bilayer. Residues 1437-1491 (YKYRNRDEGSYHVDESRNYISNSATQPNGAAVKEKPIGVPKNKKDKKNKDKEYYV) are Cytoplasmic-facing. The tract at residues 1457-1491 (SNSATQPNGAAVKEKPIGVPKNKKDKKNKDKEYYV) is disordered.

Belongs to the neurexin family.

The protein localises to the membrane. Neuronal cell surface protein that may be involved in cell recognition and cell adhesion. The polypeptide is Neurexin-1a (nrxn1a) (Danio rerio (Zebrafish)).